A 205-amino-acid polypeptide reads, in one-letter code: FMN-dependent NADH:quinone oxidoreductase (205 aa).

FMN-binding positions include Ser10, 16 to 18 (SHS), and 96 to 99 (MYNF).

The protein belongs to the azoreductase type 1 family. As to quaternary structure, homodimer. FMN serves as cofactor.

It catalyses the reaction 2 a quinone + NADH + H(+) = 2 a 1,4-benzosemiquinone + NAD(+). It carries out the reaction N,N-dimethyl-1,4-phenylenediamine + anthranilate + 2 NAD(+) = 2-(4-dimethylaminophenyl)diazenylbenzoate + 2 NADH + 2 H(+). In terms of biological role, quinone reductase that provides resistance to thiol-specific stress caused by electrophilic quinones. Its function is as follows. Also exhibits azoreductase activity. Catalyzes the reductive cleavage of the azo bond in aromatic azo compounds to the corresponding amines. The sequence is that of FMN-dependent NADH:quinone oxidoreductase from Nostoc punctiforme (strain ATCC 29133 / PCC 73102).